The following is a 339-amino-acid chain: UPF0324 membrane protein SpyM3_0740 (339 aa).

9 helical membrane-spanning segments follow: residues 7-24 (KLPGLLLCLLLALPAWYL), 28-50 (FPIIGAPVFAILLGMLLALFYHH), 57-79 (GISFTSKYILQTAVVLLGFGLNL), 84-106 (AVGMQSLPIIISTIATALLVAYG), 118-140 (ATLVGIGSSICGGSAIAATAPVI), 150-172 (AISVIFLFNMLAALLFPSLGQLL), 256-275 (FILFFLLASLITTLMTSLGV), 290-307 (FIVMAMAAIGLNTNLVKL), and 314-336 (AILLGSICWVAITLVSLAMQLSL).

The protein belongs to the UPF0324 family.

The protein localises to the cell membrane. The polypeptide is UPF0324 membrane protein SpyM3_0740 (Streptococcus pyogenes serotype M3 (strain ATCC BAA-595 / MGAS315)).